The primary structure comprises 373 residues: Chaperone protein DnaJ (373 aa).

Positions 5–70 (DYYEVLGVNR…QKRAAYDQYG (66 aa)) constitute a J domain. The segment at 133–211 (GTETKIRIPV…CHGGGRVKQH (79 aa)) adopts a CR-type zinc-finger fold. Zn(2+)-binding residues include cysteine 146, cysteine 149, cysteine 163, cysteine 166, cysteine 185, cysteine 188, cysteine 199, and cysteine 202. 4 CXXCXGXG motif repeats span residues 146–153 (CETCHGSG), 163–170 (CSTCGGHG), 185–192 (CPKCHGSG), and 199–206 (CPTCHGGG). Residues 346–373 (LEDINQQDSGKHSPREKSWMTKVKDFFQ) are disordered. A compositionally biased stretch (basic and acidic residues) spans 354-373 (SGKHSPREKSWMTKVKDFFQ).

This sequence belongs to the DnaJ family. Homodimer. Zn(2+) is required as a cofactor.

It localises to the cytoplasm. Participates actively in the response to hyperosmotic and heat shock by preventing the aggregation of stress-denatured proteins and by disaggregating proteins, also in an autonomous, DnaK-independent fashion. Unfolded proteins bind initially to DnaJ; upon interaction with the DnaJ-bound protein, DnaK hydrolyzes its bound ATP, resulting in the formation of a stable complex. GrpE releases ADP from DnaK; ATP binding to DnaK triggers the release of the substrate protein, thus completing the reaction cycle. Several rounds of ATP-dependent interactions between DnaJ, DnaK and GrpE are required for fully efficient folding. Also involved, together with DnaK and GrpE, in the DNA replication of plasmids through activation of initiation proteins. This is Chaperone protein DnaJ from Methylobacillus flagellatus (strain ATCC 51484 / DSM 6875 / VKM B-1610 / KT).